The primary structure comprises 404 residues: 11-beta-hydroxysteroid dehydrogenase type 2 (404 aa).

82-111 serves as a coordination point for NAD(+); it reads TRAVLITGCDSGFGNATAKKLDTMGFTVLA. Residue S219 coordinates substrate. Catalysis depends on Y232, which acts as the Proton acceptor. The disordered stretch occupies residues 383–404; sequence LTSARDIAQDQGPRPDPSPTAQ.

It belongs to the short-chain dehydrogenases/reductases (SDR) family. Interacts with ligand-free cytoplasmic NR3C2. As to expression, highly expressed in kidney, adrenal and colon; detected at lower levels on lung, liver, and spleen. Expressed in oocytes. Expressed in uterine tissues and in corpora lutea.

It is found in the microsome. Its subcellular location is the endoplasmic reticulum. The catalysed reaction is an 11beta-hydroxysteroid + NAD(+) = an 11-oxosteroid + NADH + H(+). It catalyses the reaction corticosterone + NAD(+) = 11-dehydrocorticosterone + NADH + H(+). It carries out the reaction cortisol + NAD(+) = cortisone + NADH + H(+). The enzyme catalyses 11beta,17beta-dihydroxyandrost-4-ene-3-one + NAD(+) = 17beta-hydroxyandrost-4-ene-3,11-dione + NADH + H(+). The catalysed reaction is 11beta-hydroxyandrost-4-ene-3,17-dione + NAD(+) = androst-4-ene-3,11,17-trione + NADH + H(+). The protein operates within steroid metabolism. With respect to regulation, inhibited by glycyrrhetinic acid, carbenoloxone, 11-alpha-OH-progesterone and 11-beta-OH-progesterone. Catalyzes the conversion of biologically active 11beta-hydroxyglucocorticoids (11beta-hydroxysteroid) such as cortisol, to inactive 11-ketoglucocorticoids (11-oxosteroid) such as cortisone, in the presence of NAD(+). Functions as a dehydrogenase (oxidase), thereby decreasing the concentration of active glucocorticoids, thus protecting the nonselective mineralocorticoid receptor from occupation by glucocorticoids. Affinity towards corticosterone is higher than cortisol or dexamethasone. Plays an important role in maintaining glucocorticoids balance during preimplantation and protects the fetus from excessive maternal corticosterone exposure. Catalyzes the oxidation of 11beta-hydroxytestosterone (11beta,17beta-dihydroxyandrost-4-ene-3-one) to 11-ketotestosterone (17beta-hydroxyandrost-4-ene-3,11-dione), a major bioactive androgen. Catalyzes the conversion of 11beta-hydroxyandrostenedione (11beta-hydroxyandrost-4-ene-3,17-dione) to 11-ketoandrostenedione (androst-4-ene-3,11,17-trione), which can be further metabolized to 11-ketotestosterone. Converts 7-beta-25-dihydroxycholesterol to 7-oxo-25-hydroxycholesterol in vitro. 7-beta-25-dihydroxycholesterol (not 7-oxo-25-hydroxycholesterol) acts as ligand for the G-protein-coupled receptor (GPCR) Epstein-Barr virus-induced gene 2 (EBI2) and may thereby regulate immune cell migration. May protect ovulating oocytes and fertilizing spermatozoa from the adverse effects of cortisol. The chain is 11-beta-hydroxysteroid dehydrogenase type 2 (HSD11B2) from Bos taurus (Bovine).